Reading from the N-terminus, the 106-residue chain is Nucleoid-associated protein Smal_0858 (106 aa).

The interval 81-106 (IDAESKSKMGSATAGMQLPPGMKLPF) is disordered.

It belongs to the YbaB/EbfC family. In terms of assembly, homodimer.

Its subcellular location is the cytoplasm. It localises to the nucleoid. Functionally, binds to DNA and alters its conformation. May be involved in regulation of gene expression, nucleoid organization and DNA protection. In Stenotrophomonas maltophilia (strain R551-3), this protein is Nucleoid-associated protein Smal_0858.